Reading from the N-terminus, the 60-residue chain is Sec-independent protein translocase protein TatA (60 aa).

A helical membrane pass occupies residues 1–21 (MAGLGVTELLIILAIVIVLFG).

The protein belongs to the TatA/E family. In terms of assembly, forms a complex with TatC.

The protein resides in the cell membrane. In terms of biological role, part of the twin-arginine translocation (Tat) system that transports large folded proteins containing a characteristic twin-arginine motif in their signal peptide across membranes. TatA could form the protein-conducting channel of the Tat system. This is Sec-independent protein translocase protein TatA from Herpetosiphon aurantiacus (strain ATCC 23779 / DSM 785 / 114-95).